A 222-amino-acid chain; its full sequence is Protein-L-isoaspartate O-methyltransferase (222 aa).

S70 is an active-site residue.

It belongs to the methyltransferase superfamily. L-isoaspartyl/D-aspartyl protein methyltransferase family.

It is found in the cytoplasm. The enzyme catalyses [protein]-L-isoaspartate + S-adenosyl-L-methionine = [protein]-L-isoaspartate alpha-methyl ester + S-adenosyl-L-homocysteine. Functionally, catalyzes the methyl esterification of L-isoaspartyl residues in peptides and proteins that result from spontaneous decomposition of normal L-aspartyl and L-asparaginyl residues. It plays a role in the repair and/or degradation of damaged proteins. This is Protein-L-isoaspartate O-methyltransferase from Jannaschia sp. (strain CCS1).